A 914-amino-acid chain; its full sequence is Linoleate 13S-lipoxygenase 3-1, chloroplastic (914 aa).

The transit peptide at 1–83 directs the protein to the chloroplast; that stretch reads MALAKEIMGI…PEKAVRFKVR (83 aa). The PLAT domain maps to 96 to 218; it reads LKETIVKHLD…DHPGKRIFFS (123 aa). Positions 221 to 914 constitute a Lipoxygenase domain; that stretch reads PYLPDETPAG…CRGVPNSVSI (694 aa). 5 residues coordinate Fe cation: H574, H579, H765, N769, and I914.

It belongs to the lipoxygenase family. As to quaternary structure, monomer. Fe cation serves as cofactor. In terms of tissue distribution, expressed in roots and leaves. Detected in tubers and flower buds.

The protein resides in the plastid. Its subcellular location is the chloroplast stroma. It localises to the chloroplast thylakoid. It carries out the reaction (9Z,12Z)-octadecadienoate + O2 = (13S)-hydroperoxy-(9Z,11E)-octadecadienoate. The enzyme catalyses (9Z,12Z,15Z)-octadecatrienoate + O2 = (13S)-hydroperoxy-(9Z,11E,15Z)-octadecatrienoate. It functions in the pathway lipid metabolism; oxylipin biosynthesis. Functionally, plant lipoxygenases may be involved in a number of diverse aspects of plant physiology including growth and development, pest resistance, and senescence or responses to wounding. Required for the regulation of wound-induced gene expression, but is not involved in the bulk production of jasmonate upon wounding. Catalyzes the hydroperoxidation of lipids containing a cis,cis-1,4-pentadiene structure. Linolenic acid is the preferred substrate, before linoleic and arachidonic acids. In Solanum tuberosum (Potato), this protein is Linoleate 13S-lipoxygenase 3-1, chloroplastic (LOX3.1).